Here is a 288-residue protein sequence, read N- to C-terminus: Shikimate dehydrogenase (NADP(+)) (288 aa).

Residues 14–16 and threonine 63 contribute to the shikimate site; that span reads SIS. Lysine 67 acts as the Proton acceptor in catalysis. Glutamate 79 lines the NADP(+) pocket. Positions 88 and 103 each coordinate shikimate. NADP(+) is bound by residues 127 to 131, 151 to 156, and methionine 219; these read GSGGA and NRTYEK. Tyrosine 221 serves as a coordination point for shikimate. NADP(+) is bound at residue glycine 242.

It belongs to the shikimate dehydrogenase family. As to quaternary structure, homodimer.

The enzyme catalyses shikimate + NADP(+) = 3-dehydroshikimate + NADPH + H(+). It functions in the pathway metabolic intermediate biosynthesis; chorismate biosynthesis; chorismate from D-erythrose 4-phosphate and phosphoenolpyruvate: step 4/7. Involved in the biosynthesis of the chorismate, which leads to the biosynthesis of aromatic amino acids. Catalyzes the reversible NADPH linked reduction of 3-dehydroshikimate (DHSA) to yield shikimate (SA). This Caldicellulosiruptor bescii (strain ATCC BAA-1888 / DSM 6725 / KCTC 15123 / Z-1320) (Anaerocellum thermophilum) protein is Shikimate dehydrogenase (NADP(+)).